The primary structure comprises 915 residues: Metabotropic glutamate receptor 7 (915 aa).

The signal sequence occupies residues 1–34 (MVQLGKLLRVLTLMKFPCCVLEVLLCVLAAAARG). Topologically, residues 35–590 (QEMYAPHSIR…IIKLEWHSPW (556 aa)) are extracellular. Cysteines 67 and 109 form a disulfide. The N-linked (GlcNAc...) asparagine glycan is linked to Asn-98. Residues Ser-159, 180–182 (AST), Tyr-230, and Asp-314 each bind L-glutamate. 7 cysteine pairs are disulfide-bonded: Cys-249–Cys-541, Cys-374–Cys-390, Cys-430–Cys-437, Cys-523–Cys-542, Cys-527–Cys-545, Cys-548–Cys-560, and Cys-563–Cys-576. L-glutamate is bound at residue Lys-407. Asn-458 and Asn-486 each carry an N-linked (GlcNAc...) asparagine glycan. Asn-572 carries an N-linked (GlcNAc...) asparagine glycan. The helical transmembrane segment at 591–615 (AVIPVFLAMLGIIATIFVMATFIRY) threads the bilayer. The Cytoplasmic segment spans residues 616–627 (NDTPIVRASGRE). The helical transmembrane segment at 628-648 (LSYVLLTGIFLCYIITFLMIA) threads the bilayer. Topologically, residues 649–654 (KPDVAV) are extracellular. The chain crosses the membrane as a helical span at residues 655 to 675 (CSFRRVFLGLGMCISYAALLT). Residues 676–702 (KTNRIYRIFEQGKKSVTAPRLISPTSQ) are Cytoplasmic-facing. A helical membrane pass occupies residues 703 to 723 (LAITSSLISVQLLGVFIWFGV). Residues 724 to 753 (DPPNIIIDYDEHKTMNPEQARGVLKCDITD) lie on the Extracellular side of the membrane. The chain crosses the membrane as a helical span at residues 754–775 (LQIICSLGYSILLMVTCTVYAI). Over 776-788 (KTRGVPENFNEAK) the chain is Cytoplasmic. A helical transmembrane segment spans residues 789 to 810 (PIGFTMYTTCIVWLAFIPIFFG). At 811-825 (TAQSAEKLYIQTTTL) the chain is on the extracellular side. The chain crosses the membrane as a helical span at residues 826–850 (TISMNLSASVALGMLYMPKVYIIIF). At 851 to 915 (HPELNVQKRK…KYVSYNNLVI (65 aa)) the chain is on the cytoplasmic side. The tract at residues 874–895 (SRLSHKPSDRPNGEAKTELCEN) is disordered. The span at 879 to 892 (KPSDRPNGEAKTEL) shows a compositional bias: basic and acidic residues. The residue at position 900 (Ser-900) is a Phosphoserine.

Belongs to the G-protein coupled receptor 3 family. As to quaternary structure, homodimer. Interacts with PICK1.

Its subcellular location is the cell membrane. G-protein coupled receptor activated by glutamate that regulates axon outgrowth through the MAPK-cAMP-PKA signaling pathway during neuronal development. Ligand binding causes a conformation change that triggers signaling via guanine nucleotide-binding proteins (G proteins) and modulates the activity of downstream effectors, such as adenylate cyclase that it inhibits. The protein is Metabotropic glutamate receptor 7 (Grm7) of Mus musculus (Mouse).